The primary structure comprises 380 residues: Methenyltetrahydrofolate synthase domain-containing protein (380 aa).

Residues 245-258 show a composition bias toward basic and acidic residues; the sequence is EEQAGKDVTLRDGP. Disordered stretches follow at residues 245–283 and 361–380; these read EEQA…PLSS and LVGS…IAGP. One can recognise an RRM domain in the interval 282 to 355; that stretch reads SSVQIGNLPR…NTVRVVLARQ (74 aa).

The chain is Methenyltetrahydrofolate synthase domain-containing protein (MTHFSD) from Bos taurus (Bovine).